The following is a 566-amino-acid chain: Chaperone Ric-8 (566 aa).

This sequence belongs to the synembryn family. Interacts with GDP-bound G(i)-alpha protein. Does not interact with G-alpha proteins when they are in complex with subunits beta and gamma. Interacts with Frq2 in a Ca(2+)-independent manner but does not interact with Frq1.

The protein resides in the cytoplasm. It localises to the cell cortex. Its subcellular location is the presynapse. Its function is as follows. Chaperone that specifically binds and folds some, but not all, nascent G alpha proteins prior to G protein heterotrimer formation, promoting their stability and activity. Also acts as a guanine nucleotide exchange factor (GEF) for G alpha proteins by stimulating exchange of bound GDP for free GTP. Plays a key role in asymmetric spindle positioning, a step for asymmetric cell division that generates cell diversity during development by activating G(i) alpha protein independently of G-protein coupled receptors. Required during gastrulation and sensory organ precursor (SOP) formation. Plays a role in positively regulating synapse number and neurotransmitter release. This chain is Chaperone Ric-8 (ric8a), found in Drosophila pseudoobscura pseudoobscura (Fruit fly).